The chain runs to 295 residues: 4-hydroxy-tetrahydrodipicolinate synthase (295 aa).

Threonine 46 contributes to the pyruvate binding site. The Proton donor/acceptor role is filled by tyrosine 134. Lysine 162 (schiff-base intermediate with substrate) is an active-site residue. A pyruvate-binding site is contributed by isoleucine 205.

The protein belongs to the DapA family. Homotetramer; dimer of dimers.

The protein resides in the cytoplasm. It carries out the reaction L-aspartate 4-semialdehyde + pyruvate = (2S,4S)-4-hydroxy-2,3,4,5-tetrahydrodipicolinate + H2O + H(+). It participates in amino-acid biosynthesis; L-lysine biosynthesis via DAP pathway; (S)-tetrahydrodipicolinate from L-aspartate: step 3/4. In terms of biological role, catalyzes the condensation of (S)-aspartate-beta-semialdehyde [(S)-ASA] and pyruvate to 4-hydroxy-tetrahydrodipicolinate (HTPA). In Anaeromyxobacter dehalogenans (strain 2CP-1 / ATCC BAA-258), this protein is 4-hydroxy-tetrahydrodipicolinate synthase.